The chain runs to 411 residues: Cytosolic Fe-S cluster assembly factor narfl (411 aa).

[4Fe-4S] cluster contacts are provided by cysteine 11, cysteine 124, cysteine 180, cysteine 329, and cysteine 333.

This sequence belongs to the NARF family. In terms of assembly, component of the CIA complex.

Functionally, component of the cytosolic iron-sulfur protein assembly (CIA) complex, a multiprotein complex that mediates the incorporation of iron-sulfur cluster into extramitochondrial Fe/S proteins. This Danio rerio (Zebrafish) protein is Cytosolic Fe-S cluster assembly factor narfl (narfl).